The following is a 435-amino-acid chain: MKIEVKESTMVKPAAETPQQRLWNSNVDLVVPNFHTPSVYFYRPTGSPNFFDGKVLKEALSKALVPFYPMAGRLCRDEDGRIEIDCKGQGVLFVEAESDGVVDDFGDFAPTLELRQLIPAVDYSQGIQSYALLVLQITHFKCGGVSLGVGMQHHAADGASGLHFINTWSDMARGLDLTIPPFIDRTLLRARDPPQPQFPHVEYQPPPTLKVTPENTPISEAVPETSVSIFKLTRDQINTLKAKSKEDGNTVNYSSYEMLAGHVWRSTCMARGLAHDQETKLYIATDGRSRLRPSLPPGYFGNVIFTTTPIAVAGDIQSKPIWYAASKLHDALARMDNDYLRSALDYLELQPDLKALVRGAHTFKCPNLGITSWSRLPIHDADFGWGRPIFMGPGGIAYEGLSFILPSPTNDGSQSVAISLQAEHMKLFEKFLYDF.

Active-site proton acceptor residues include His-153 and Asp-382.

This sequence belongs to the plant acyltransferase family. As to expression, highly expressed in stem vascular tissues.

It carries out the reaction shikimate + 4-coumaroyl-CoA = trans-4-coumaroylshikimate + CoA. Acyltransferase involved in the biosynthesis of lignin. The affinity for shikimate as acceptor is 100-fold higher than for quinate. The most efficient donors are caffeoyl-CoA &gt; p-coumaroyl-CoA &gt; feruloyl-CoA &gt;&gt; sinapoyl-CoA. This chain is Shikimate O-hydroxycinnamoyltransferase (HST), found in Nicotiana tabacum (Common tobacco).